Consider the following 376-residue polypeptide: Nucleoside diphosphate kinase homolog 7 (376 aa).

The 89-residue stretch at 3–91 (HSERFVFIAE…YTARQLGSRK (89 aa)) folds into the DM10 domain.

Belongs to the NDK family. As to quaternary structure, component of sperm flagellar doublet microtubules. Component of the gamma-tubulin ring complex. Post-translationally, undergoes autophosphorylation. Expressed in airway epithelial cells.

The protein localises to the cytoplasm. It localises to the cytoskeleton. Its subcellular location is the microtubule organizing center. The protein resides in the centrosome. It is found in the nucleus. The protein localises to the spindle. It localises to the cilium axoneme. Its subcellular location is the flagellum axoneme. The protein resides in the cell projection. It is found in the cilium. In terms of biological role, possesses an intrinsic kinase activity. Displays 3'-5' exonuclease activity with a preference for single-stranded DNA. Does not seem to have nucleoside diphosphate kinase activity. Functional component of the gamma-tubulin ring complex, implicated in the regulation of the microtubule-nucleating activity of the gamma-tubulin ring complex in centrosomes, in a kinase activity-dependent manner. Part of the dynein-decorated doublet microtubules (DMTs) in cilia axoneme, which is required for motile cilia beating. The sequence is that of Nucleoside diphosphate kinase homolog 7 from Homo sapiens (Human).